Consider the following 1297-residue polypeptide: MTVKTFRGSPALSEFRLTQLQQKCQQYQLPITSVYAEYLHFVEQKTSLVEDEIVKLQALLHYGSMFSELKPAGYCLIVTPRVGTISSWSSKATDIAHNCGLSKVNRIERGIAYYFNIERDLTEAELATLKDLLHDRMLETVLNHETEAALLFTQQEPKALTTIDILNGGRQALEQANIALGLALADDEMDYLVESFTALKRNPQDVELYMFAQANSEHCRHKIFNADWIIDGKKQDKSLFKMIKNTFEQTPDFVLSAYKDNAAVMEGSKVGRWFPDPDGQYRVHQEDVHILMKVETHNHPTAISPFPGAATGSGGEIRDEGATGRGAKPKAGLTGFSVSNLVIPNFEQPWENPLSKPNRIASALDIMIDAPLGSAAFNNEFGRPALLGYFRTYEEKVNSFAGKEVRGYHKPIMLAGGIGNIRGEQVQKGEIPIGAKLIVLGGAAMNIGLGGGAASSMDSGKSKEDLDFASVQRENPEMERRCQEVIDRCWQLGEENPILFIHDVGAGGLSNAMPELVHDGKRGGKFDLRSILCDEKGMSPLEIWCNESQERYVLAVAPENLELFTALCERERAPFAVIGEATQAEHLILHDSHFDNNPIDLPMNVLLGKTPKMTREVLSKTVENQSLKIESIQLKEAFHRVLRLPVVAEKTFLITIGDRSVTGMVARDQMVGPWQIPVSDVAVTTASLDSYHGEAMAIGERSPVALLDFSASARLAVAEAITNIAGTLIGEMKRIKLSANWMSAAGHTGEDAGLYEAVKAVGEELCPALGLTIPVGKDSMSMKTTWIDNGEQKSVTAPLSLVISAFARVEDVRKTLTPQLRTDKGFSSLLLIDLGEGHNRLGATALAQVYKQLGDKPADVVKVQRLKDFYNAMQTLVAEDKLLAYHDRSDGGLITTLAEMAFAGHCGVEVDISALGDNDLAVLFNEELGAVIQVADSQLESVREVLKAHNLLGIIHQLGTVTADDRFEISRGSHKLFSEKRSELRSIWAELTYQMQRLRDNPECAEQEFEAKKNPDDKGLSAFLTYDVNEDITAPFINKGVKPTIAILREQGVNSHYEMAAAFDRAGFNAIDVHMSDLMIGRRNLAEFNAMVACGGFSYGDVLGAGGGWAKSILFNPKLHEQFSQFFINPNTLTLGVCNGCQMISNLAEIIPGTENWPHFVRNKSERFEARVSLVKINEVDSVWFAGMAGSHMPIAVSHGEGQVKFKSVEQFAGLKAQGIIAAQYIDNNGSPTELYPANPNGSSEGITAITNLDGRVAIMMPHPERVFRAVSNSWHPENWTEDGAWMRLFRNARMVF.

Positions 301–329 are disordered; sequence TAISPFPGAATGSGGEIRDEGATGRGAKP. 308 to 319 contributes to the ATP binding site; the sequence is GAATGSGGEIRD. 4 residues coordinate Mg(2+): D680, E719, N723, and D887. S889 provides a ligand contact to ATP. In terms of domain architecture, Glutamine amidotransferase type-1 spans 1045-1297; sequence IAILREQGVN…RLFRNARMVF (253 aa). C1138 acts as the Nucleophile in catalysis. Residues H1263 and E1265 contribute to the active site.

This sequence in the N-terminal section; belongs to the FGAMS family. Monomer.

The protein localises to the cytoplasm. It catalyses the reaction N(2)-formyl-N(1)-(5-phospho-beta-D-ribosyl)glycinamide + L-glutamine + ATP + H2O = 2-formamido-N(1)-(5-O-phospho-beta-D-ribosyl)acetamidine + L-glutamate + ADP + phosphate + H(+). It functions in the pathway purine metabolism; IMP biosynthesis via de novo pathway; 5-amino-1-(5-phospho-D-ribosyl)imidazole from N(2)-formyl-N(1)-(5-phospho-D-ribosyl)glycinamide: step 1/2. Its function is as follows. Phosphoribosylformylglycinamidine synthase involved in the purines biosynthetic pathway. Catalyzes the ATP-dependent conversion of formylglycinamide ribonucleotide (FGAR) and glutamine to yield formylglycinamidine ribonucleotide (FGAM) and glutamate. In Haemophilus influenzae (strain ATCC 51907 / DSM 11121 / KW20 / Rd), this protein is Phosphoribosylformylglycinamidine synthase.